Consider the following 157-residue polypeptide: 6,7-dimethyl-8-ribityllumazine synthase (157 aa).

5-amino-6-(D-ribitylamino)uracil is bound by residues phenylalanine 23, 57 to 59 (AFE), and 81 to 83 (AVI). 86 to 87 (AT) is a binding site for (2S)-2-hydroxy-3-oxobutyl phosphate. Residue histidine 89 is the Proton donor of the active site. Phenylalanine 114 lines the 5-amino-6-(D-ribitylamino)uracil pocket. A (2S)-2-hydroxy-3-oxobutyl phosphate-binding site is contributed by arginine 128.

It belongs to the DMRL synthase family.

It catalyses the reaction (2S)-2-hydroxy-3-oxobutyl phosphate + 5-amino-6-(D-ribitylamino)uracil = 6,7-dimethyl-8-(1-D-ribityl)lumazine + phosphate + 2 H2O + H(+). The protein operates within cofactor biosynthesis; riboflavin biosynthesis; riboflavin from 2-hydroxy-3-oxobutyl phosphate and 5-amino-6-(D-ribitylamino)uracil: step 1/2. In terms of biological role, catalyzes the formation of 6,7-dimethyl-8-ribityllumazine by condensation of 5-amino-6-(D-ribitylamino)uracil with 3,4-dihydroxy-2-butanone 4-phosphate. This is the penultimate step in the biosynthesis of riboflavin. This is 6,7-dimethyl-8-ribityllumazine synthase from Desulforapulum autotrophicum (strain ATCC 43914 / DSM 3382 / VKM B-1955 / HRM2) (Desulfobacterium autotrophicum).